Here is a 372-residue protein sequence, read N- to C-terminus: MIPGSTSGISFSRILSRQASHQDATQHTDAQQAEIQQAAEDSSPGAEVQKFVQSTDEMSAALAQFRNRRDYEKKSSNLSNSFERVLEDEALPKAKQILKLISVHGGALEDFLRQARSLFPDPSDLVLVLRELLRRKDLEEIVRKKLESLLKHVEEQTDPKTLKAGINCALKARLFGKTLSLKPGLLRASYRQFIQSESHEVEIYSDWIASYGYQRRLVVLDFIEGSLLTDIDANDASCSRLEFGQLLRRLTQLKMLRSADLLFVSTLLSYSFTKAFNAEESSWLLLMLSLLQQPHEVDSLLADIIGLNALLLSHKEHASFLQIFYQVCKAIPSSLFYEEYWQEELLMALRSMTDIAYKHEMAEQRRTIEKLS.

Residues Met-1–Ala-19 show a composition bias toward polar residues. The tract at residues Met-1–Glu-47 is disordered. Positions His-21–Glu-40 are enriched in low complexity.

It is found in the cell membrane. In terms of biological role, involved in the triggering of intracellular events that lead to microbial internalization. These events include increase in calcium level, redistribution of actin microfilaments, and changes in the normal structure of the microvilli. Encoded within the type III secretion system (SPI-1 T3SS), it is essential for the translocation of protein effectors into host cells. Forms a complex with SipB and SipC in the presence of their chaperone SicA. The sequence is that of Invasion protein InvE (invE) from Salmonella typhi.